A 211-amino-acid chain; its full sequence is 2,3-bisphosphoglycerate-dependent phosphoglycerate mutase (211 aa).

Residues 9–16 (RHGQSDWN), 22–23 (TG), Arg61, 88–91 (ERDY), Lys99, 115–116 (RR), and 159–160 (GN) each bind substrate. Residue His10 is the Tele-phosphohistidine intermediate of the active site. Glu88 functions as the Proton donor/acceptor in the catalytic mechanism.

It belongs to the phosphoglycerate mutase family. BPG-dependent PGAM subfamily. As to quaternary structure, homodimer.

The catalysed reaction is (2R)-2-phosphoglycerate = (2R)-3-phosphoglycerate. It participates in carbohydrate degradation; glycolysis; pyruvate from D-glyceraldehyde 3-phosphate: step 3/5. Its function is as follows. Catalyzes the interconversion of 2-phosphoglycerate and 3-phosphoglycerate. The sequence is that of 2,3-bisphosphoglycerate-dependent phosphoglycerate mutase from Rhizobium rhizogenes (strain K84 / ATCC BAA-868) (Agrobacterium radiobacter).